The sequence spans 677 residues: Zinc finger and BTB domain-containing protein 5 (677 aa).

One can recognise a BTB domain in the interval 24–93 (CDCVIVVGNR…MYTSTLMLGE (70 aa)). The segment covering 158-181 (LNSSQNGEEQPAPMSSSMRSNLDQ) has biased composition (polar residues). Disordered stretches follow at residues 158-252 (LNSS…MTDN) and 287-312 (SMAS…SFQC). S234 is subject to Phosphoserine. A Glycyl lysine isopeptide (Lys-Gly) (interchain with G-Cter in SUMO2) cross-link involves residue K239. Residues 287 to 300 (SMASRATQVETSFD) are compositionally biased toward polar residues. Glycyl lysine isopeptide (Lys-Gly) (interchain with G-Cter in SUMO2) cross-links involve residues K322 and K330. The disordered stretch occupies residues 331–387 (SEPLSSPEPQDEVSDVTSQAEGSESVEVEGVVVSAEKIDLSPESSDRSFSDPQSSTD). The span at 350 to 365 (AEGSESVEVEGVVVSA) shows a compositional bias: low complexity. Positions 366–379 (EKIDLSPESSDRSF) are enriched in basic and acidic residues. S371 carries the phosphoserine modification. Residues K404 and K415 each participate in a glycyl lysine isopeptide (Lys-Gly) (interchain with G-Cter in SUMO2) cross-link. Residues 447-474 (LLSPEAGPAGGPSSAPGSHVENPFSEPA) are disordered. Positions 449–464 (SPEAGPAGGPSSAPGS) are enriched in low complexity. Residue K541 forms a Glycyl lysine isopeptide (Lys-Gly) (interchain with G-Cter in SUMO2) linkage. Positions 552 to 576 (QIPENSTSSQLMMNGATSSFENGHP) are enriched in polar residues. Positions 552 to 585 (QIPENSTSSQLMMNGATSSFENGHPSQPGPPQLT) are disordered. Glycyl lysine isopeptide (Lys-Gly) (interchain with G-Cter in SUMO2) cross-links involve residues K594 and K597. Residues 613-635 (YACKICCKTFLTLTDCKKHIRVH) form a C2H2-type 1 zinc finger. A C2H2-type 2; atypical zinc finger spans residues 641 to 664 (YACLKCGKRFSQSSHLYKHSKTTC). Glycyl lysine isopeptide (Lys-Gly) (interchain with G-Cter in SUMO2) cross-links involve residues K645 and K658.

The protein resides in the nucleus. Its function is as follows. May be involved in transcriptional regulation. This is Zinc finger and BTB domain-containing protein 5 (ZBTB5) from Homo sapiens (Human).